We begin with the raw amino-acid sequence, 441 residues long: Probable cyclic di-GMP phosphodiesterase VC_1348 (441 aa).

Residues 72 to 187 enclose the Response regulatory domain; that stretch reads TILIVDDSPD…LLKSRVHTHL (116 aa). At D120 the chain carries 4-aspartylphosphate. Positions 214–425 constitute an HD-GYP domain; sequence LDRMQDAVVF…FIDIAQKFAD (212 aa).

The catalysed reaction is 3',3'-c-di-GMP + 2 H2O = 2 GMP + 2 H(+). Probable phosphodiesterase (PDE) that catalyzes the hydrolysis of cyclic diguanylate (c-di-GMP). Increases motility and decreases biofilm formation in vivo. This Vibrio cholerae serotype O1 (strain ATCC 39315 / El Tor Inaba N16961) protein is Probable cyclic di-GMP phosphodiesterase VC_1348.